The primary structure comprises 453 residues: Carbamoyl phosphate synthase arginine-specific small chain (453 aa).

Residues 1–28 constitute a mitochondrion transit peptide; it reads MFARVFKAMPARASALTSVNASIQARFM. The region spanning 219 to 406 is the Glutamine amidotransferase type-1 domain; that stretch reads HVAVIDCGVK…IDSVKKYKAS (188 aa). Catalysis depends on Cys295, which acts as the Nucleophile. Active-site residues include His379 and Glu381.

Belongs to the CarA family. As to quaternary structure, heterodimer composed of 2 chains; the small (or glutamine) chain promotes the hydrolysis of glutamine to ammonia, which is used by the large (or ammonia) chain to synthesize carbamoyl phosphate.

The protein resides in the mitochondrion matrix. The catalysed reaction is hydrogencarbonate + L-glutamine + 2 ATP + H2O = carbamoyl phosphate + L-glutamate + 2 ADP + phosphate + 2 H(+). It catalyses the reaction L-glutamine + H2O = L-glutamate + NH4(+). It participates in amino-acid biosynthesis; L-arginine biosynthesis; carbamoyl phosphate from bicarbonate: step 1/1. In terms of biological role, small subunit of the arginine-specific carbamoyl phosphate synthase (CPSase). CPSase catalyzes the formation of carbamoyl phosphate from the ammonia moiety of glutamine, carbonate, and phosphate donated by ATP, the first step of the arginine biosynthetic pathway. The small subunit (glutamine amidotransferase) binds and cleaves glutamine to supply the large subunit with the substrate ammonia. This chain is Carbamoyl phosphate synthase arginine-specific small chain (cpa1), found in Neosartorya fischeri (strain ATCC 1020 / DSM 3700 / CBS 544.65 / FGSC A1164 / JCM 1740 / NRRL 181 / WB 181) (Aspergillus fischerianus).